Consider the following 103-residue polypeptide: Large ribosomal subunit protein bL21 (103 aa).

Belongs to the bacterial ribosomal protein bL21 family. In terms of assembly, part of the 50S ribosomal subunit. Contacts protein L20.

Functionally, this protein binds to 23S rRNA in the presence of protein L20. This is Large ribosomal subunit protein bL21 from Desulfitobacterium hafniense (strain DSM 10664 / DCB-2).